Here is a 350-residue protein sequence, read N- to C-terminus: S-adenosylmethionine:tRNA ribosyltransferase-isomerase (350 aa).

This sequence belongs to the QueA family. In terms of assembly, monomer.

Its subcellular location is the cytoplasm. It carries out the reaction 7-aminomethyl-7-carbaguanosine(34) in tRNA + S-adenosyl-L-methionine = epoxyqueuosine(34) in tRNA + adenine + L-methionine + 2 H(+). The protein operates within tRNA modification; tRNA-queuosine biosynthesis. Functionally, transfers and isomerizes the ribose moiety from AdoMet to the 7-aminomethyl group of 7-deazaguanine (preQ1-tRNA) to give epoxyqueuosine (oQ-tRNA). This chain is S-adenosylmethionine:tRNA ribosyltransferase-isomerase, found in Bacillus cereus (strain ZK / E33L).